The primary structure comprises 1177 residues: Phospholipid-transporting ATPase IF (1177 aa).

The Cytoplasmic segment spans residues Met-1–Val-55. A helical transmembrane segment spans residues Pro-56–Val-77. Residues Gln-78–Asp-82 lie on the Extracellular side of the membrane. The chain crosses the membrane as a helical span at residues Thr-83–Lys-104. Over Gln-105–Phe-289 the chain is Cytoplasmic. The helical transmembrane segment at Leu-290 to Trp-311 threads the bilayer. At Gln-312 to Asp-341 the chain is on the extracellular side. Residues Phe-342–Val-359 traverse the membrane as a helical segment. Residues Thr-360–Ala-876 lie on the Cytoplasmic side of the membrane. Asp-407 functions as the 4-aspartylphosphate intermediate in the catalytic mechanism. Positions 407, 408, 409, 531, 572, 595, 626, 706, 707, 708, 794, and 800 each coordinate ATP. Residue Asp-407 participates in Mg(2+) binding. Residue Thr-409 coordinates Mg(2+). Asp-821 contacts Mg(2+). Residues Asn-824 and Asp-825 each coordinate ATP. Asp-825 contacts Mg(2+). The helical transmembrane segment at Thr-877–Phe-898 threads the bilayer. Topologically, residues Tyr-899 to Ser-910 are extracellular. The chain crosses the membrane as a helical span at residues Val-911 to Leu-930. The Cytoplasmic portion of the chain corresponds to Leu-931–Thr-960. The helical transmembrane segment at Phe-961–Leu-982 threads the bilayer. At Ile-983 to Gly-997 the chain is on the extracellular side. Residues Asn-998–Glu-1020 form a helical membrane-spanning segment. At Thr-1021–Thr-1025 the chain is on the cytoplasmic side. Residues Trp-1026–Gly-1047 traverse the membrane as a helical segment. Residues Gly-1048 to Gln-1065 lie on the Extracellular side of the membrane. The chain crosses the membrane as a helical span at residues Leu-1066–Lys-1090. The Cytoplasmic segment spans residues Lys-1091–Cys-1177. Ser-1154 is modified (phosphoserine).

Belongs to the cation transport ATPase (P-type) (TC 3.A.3) family. Type IV subfamily. In terms of assembly, component of a P4-ATPase flippase complex which consists of a catalytic alpha subunit ATP11B and an accessory beta subunit TMEM30A. Requires Mg(2+) as cofactor.

The protein resides in the recycling endosome membrane. It is found in the early endosome. Its subcellular location is the endoplasmic reticulum. The protein localises to the golgi apparatus. It localises to the trans-Golgi network. It catalyses the reaction ATP + H2O + phospholipidSide 1 = ADP + phosphate + phospholipidSide 2.. It carries out the reaction a 1,2-diacyl-sn-glycero-3-phospho-L-serine(out) + ATP + H2O = a 1,2-diacyl-sn-glycero-3-phospho-L-serine(in) + ADP + phosphate + H(+). The enzyme catalyses a 1,2-diacyl-sn-glycero-3-phosphoethanolamine(out) + ATP + H2O = a 1,2-diacyl-sn-glycero-3-phosphoethanolamine(in) + ADP + phosphate + H(+). The ATPase activity is up-regulated by aminophospholipids PS and PE. In terms of biological role, catalytic component of a P4-ATPase flippase complex which catalyzes the hydrolysis of ATP coupled to the transport of aminophospholipids, phosphatidylserines (PS) and phosphatidylethanolamines (PE), from the outer to the inner leaflet of intracellular membranes. May contribute to the maintenance of membrane lipid asymmetry in endosome compartment. The chain is Phospholipid-transporting ATPase IF (ATP11B) from Homo sapiens (Human).